Consider the following 573-residue polypeptide: Urease subunit alpha 2 (573 aa).

The Urease domain maps to Gly135–Ser573. 3 residues coordinate Ni(2+): His140, His142, and Lys223. Lys223 is subject to N6-carboxylysine. His225 lines the substrate pocket. Ni(2+)-binding residues include His252 and His278. The Proton donor role is filled by His326. Asp366 is a Ni(2+) binding site.

It belongs to the metallo-dependent hydrolases superfamily. Urease alpha subunit family. In terms of assembly, heterotrimer of UreA (gamma), UreB (beta) and UreC (alpha) subunits. Three heterotrimers associate to form the active enzyme. The cofactor is Ni cation. In terms of processing, carboxylation allows a single lysine to coordinate two nickel ions.

The protein resides in the cytoplasm. The catalysed reaction is urea + 2 H2O + H(+) = hydrogencarbonate + 2 NH4(+). It participates in nitrogen metabolism; urea degradation; CO(2) and NH(3) from urea (urease route): step 1/1. In Brucella melitensis biotype 1 (strain ATCC 23456 / CCUG 17765 / NCTC 10094 / 16M), this protein is Urease subunit alpha 2.